Reading from the N-terminus, the 685-residue chain is Protein OCTOPUS (685 aa).

3 disordered regions span residues Met1–His34, Arg152–Glu202, and Lys280–Arg314. The span at Val179 to Glu202 shows a compositional bias: acidic residues. Positions Lys280 to Arg291 are enriched in basic residues. Over residues Asn292–Arg314 the composition is skewed to basic and acidic residues. Ser318 is modified (phosphoserine). Residues Val419–Arg471 are disordered. Residues Leu549 to Glu578 adopt a coiled-coil conformation. The tract at residues Ser584–Gly640 is disordered. Residues Val601–Ser611 show a composition bias toward low complexity.

It belongs to the OCTOPUS family. Interacts with VCC. In terms of processing, phosphorylation at Ser-318 amplifies the promotion of protophloem differentiation. Expressed in provascular cells and phloem initials (e.g. protophloem, metaphloem, sieve element precursor cells and sieve element procambium precursor cells).

The protein localises to the cell membrane. It is found in the cytoplasm. In terms of biological role, potentiates primary root protophloem differentiation. Required, together with VCC, for embryo provasculature development and cotyledon vascular complexity and connectivity. Regulates roots architecture. Mediates the recruitment of ASK7/BIN2 to the plasma membrane. In Arabidopsis thaliana (Mouse-ear cress), this protein is Protein OCTOPUS.